A 263-amino-acid chain; its full sequence is Hydroxyethylthiazole kinase 1 (263 aa).

Met-42 contributes to the substrate binding site. Residues Lys-118 and Thr-164 each contribute to the ATP site. Gly-191 lines the substrate pocket.

This sequence belongs to the Thz kinase family. Requires Mg(2+) as cofactor.

It carries out the reaction 5-(2-hydroxyethyl)-4-methylthiazole + ATP = 4-methyl-5-(2-phosphooxyethyl)-thiazole + ADP + H(+). It functions in the pathway cofactor biosynthesis; thiamine diphosphate biosynthesis; 4-methyl-5-(2-phosphoethyl)-thiazole from 5-(2-hydroxyethyl)-4-methylthiazole: step 1/1. Functionally, catalyzes the phosphorylation of the hydroxyl group of 4-methyl-5-beta-hydroxyethylthiazole (THZ). The chain is Hydroxyethylthiazole kinase 1 from Clostridium botulinum (strain Kyoto / Type A2).